The sequence spans 365 residues: 5-hydroxytryptamine receptor 1E (365 aa).

Residues 1–22 lie on the Extracellular side of the membrane; it reads MNITNCTTDASMVVRPKTVTEK. N-linked (GlcNAc...) asparagine glycosylation is found at Asn2 and Asn5. Residues 23–47 traverse the membrane as a helical segment; that stretch reads MLICMTLVIITTLTMLLNSAVIMAI. Residues 48–59 lie on the Cytoplasmic side of the membrane; sequence CTTKKLHQPANY. Residues 60–82 traverse the membrane as a helical segment; it reads LICSLAVTDLLVAVLVMPLSIMY. Residues 83–96 are Extracellular-facing; the sequence is IVMDSWRLGYFICE. Residues Cys95 and Cys173 are joined by a disulfide bond. A helical membrane pass occupies residues 97-118; the sequence is VWLSVDMTCCTCSILHLCVIAL. Positions 102 and 107 each coordinate ergotamine. The DRY motif; important for ligand-induced conformation changes motif lies at 119–121; the sequence is DRY. Over 119–138 the chain is Cytoplasmic; sequence DRYWAITNAIEYARKRTAKR. A helical transmembrane segment spans residues 139–160; sequence AGLMILTVWTISIFISMPPLFW. The Extracellular segment spans residues 161 to 179; the sequence is RSHRQLSPPPSQCTIQHDH. Ile175 provides a ligand contact to ergotamine. Residues 180–202 form a helical membrane-spanning segment; the sequence is VIYTIYSTFGAFYIPLTLILILY. Topologically, residues 203-291 are cytoplasmic; sequence YRIYHAAKSL…SSTRERKAAR (89 aa). The chain crosses the membrane as a helical span at residues 292-314; it reads ILGLILGAFILSWLPFFIKELIV. Over 315–324 the chain is Extracellular; that stretch reads GLSIYTVSSE. The chain crosses the membrane as a helical span at residues 325–347; the sequence is VGDFLTWLGYVNSLINPLLYTSF. Residues 340–344 carry the NPxxY motif; important for ligand-induced conformation changes and signaling motif; it reads NPLLY. At 348–365 the chain is on the cytoplasmic side; it reads NEDFKLAFKKLIRCREHT.

It belongs to the G-protein coupled receptor 1 family. Detected in the brain with the greatest abundance in the hippocampus, followed by the olfactory bulb. Lower levels are detected in the cortex, thalamus, pons, hypothalamus, midbrain, striatum, and cerebellum.

It localises to the cell membrane. Its function is as follows. G-protein coupled receptor for 5-hydroxytryptamine (serotonin). Also functions as a receptor for various alkaloids and psychoactive substances. Ligand binding causes a conformation change that triggers signaling via guanine nucleotide-binding proteins (G proteins) and modulates the activity of down-stream effectors, such as adenylate cyclase. Signaling inhibits adenylate cyclase activity. The sequence is that of 5-hydroxytryptamine receptor 1E (5HT1E) from Cavia porcellus (Guinea pig).